The following is a 139-amino-acid chain: Protein archease (139 aa).

Ca(2+) contacts are provided by Asp-12, Asp-138, and Ile-139.

This sequence belongs to the archease family.

Activates the tRNA-splicing ligase complex by facilitating the enzymatic turnover of catalytic subunit RtcB. Acts by promoting the guanylylation of RtcB, a key intermediate step in tRNA ligation. Can also alter the NTP specificity of RtcB such that ATP, dGTP or ITP is used efficiently. This chain is Protein archease, found in Saccharolobus islandicus (strain M.16.27) (Sulfolobus islandicus).